We begin with the raw amino-acid sequence, 66 residues long: MNILKLFFVFIVAMSLVSCSTAAPAKIPIKAIKTVGKAVGKGLRAINIASTANDVFNFLKPKKRKH.

The N-terminal stretch at 1–24 is a signal peptide; sequence MNILKLFFVFIVAMSLVSCSTAAP.

As to expression, expressed in fat body and to a lesser extent in hemocyte and Malpighian tubules.

It localises to the secreted. Has antibacterial activity against Gram-positive and Gram-negative bacteria. Probably acts by disturbing membrane functions with its amphipathic structure. The polypeptide is Moricin-2 (MOR2) (Bombyx mori (Silk moth)).